The primary structure comprises 280 residues: Dimethylglycine N-methyltransferase (280 aa).

It belongs to the methyltransferase superfamily. Monomer.

It catalyses the reaction N,N-dimethylglycine + S-adenosyl-L-methionine = glycine betaine + S-adenosyl-L-homocysteine + H(+). Its pathway is amine and polyamine biosynthesis; betaine biosynthesis via glycine pathway; betaine from glycine: step 3/3. Its function is as follows. Catalyzes the methylation of dimethylglycine to betaine with S-adenosylmethionine (AdoMet) acting as the methyl donor. It has strict specificity for dimethylglycine as the methyl group acceptors. In Parasynechococcus marenigrum (strain WH8102), this protein is Dimethylglycine N-methyltransferase.